The primary structure comprises 743 residues: NAD(P)H-quinone oxidoreductase subunit 5, chloroplastic (743 aa).

14 helical membrane passes run Trp9–Phe29, Trp40–Ile60, Ile89–Ile109, Phe125–Ile145, Ile147–Thr167, Ile184–Glu204, Asn219–Ala239, Thr258–Ala278, Leu280–Ile300, Thr396–Ser416, Trp425–Tyr445, Leu548–Phe568, Ile607–Val627, and Tyr723–Leu743.

This sequence belongs to the complex I subunit 5 family. In terms of assembly, NDH is composed of at least 16 different subunits, 5 of which are encoded in the nucleus.

Its subcellular location is the plastid. The protein localises to the chloroplast thylakoid membrane. It catalyses the reaction a plastoquinone + NADH + (n+1) H(+)(in) = a plastoquinol + NAD(+) + n H(+)(out). The enzyme catalyses a plastoquinone + NADPH + (n+1) H(+)(in) = a plastoquinol + NADP(+) + n H(+)(out). Its function is as follows. NDH shuttles electrons from NAD(P)H:plastoquinone, via FMN and iron-sulfur (Fe-S) centers, to quinones in the photosynthetic chain and possibly in a chloroplast respiratory chain. The immediate electron acceptor for the enzyme in this species is believed to be plastoquinone. Couples the redox reaction to proton translocation, and thus conserves the redox energy in a proton gradient. This Carpenteria californica (Tree anemone) protein is NAD(P)H-quinone oxidoreductase subunit 5, chloroplastic (ndhF).